Consider the following 202-residue polypeptide: MARRPPPYAWLGPGVVLGGLLPTVFLLWDALSGGLGANPVKQATHQTGQLALIVLTLSLACTPARVWLGWTWAARIRKALGLLAAFYAVLHFGIYLRGQDFSLGRIWEDVTERPFITSGFAALLLLLPLVLTSGKGSVRRLGFARWTLLHRLVYLAAALGALHYWWGVKKDHSGPLLAVLVLAALGLARLKTPARLNRPARQ.

6 helical membrane passes run Tyr8–Trp28, Leu50–Trp70, Ile76–Leu96, Pro114–Gly134, Leu148–Val168, and Gly174–Ala194.

Belongs to the MsrQ family. Heterodimer of a catalytic subunit (MsrP) and a heme-binding subunit (MsrQ). FMN serves as cofactor. Heme b is required as a cofactor.

The protein resides in the cell membrane. In terms of biological role, part of the MsrPQ system that repairs oxidized cell envelope proteins containing methionine sulfoxide residues (Met-O), using respiratory chain electrons. Thus protects these proteins from oxidative-stress damage caused by reactive species of oxygen and chlorine. MsrPQ is essential for the maintenance of envelope integrity under bleach stress, rescuing a wide series of structurally unrelated cell envelope proteins from methionine oxidation. MsrQ provides electrons for reduction to the reductase catalytic subunit MsrP, using the quinone pool of the respiratory chain. This chain is Protein-methionine-sulfoxide reductase heme-binding subunit MsrQ, found in Deinococcus radiodurans (strain ATCC 13939 / DSM 20539 / JCM 16871 / CCUG 27074 / LMG 4051 / NBRC 15346 / NCIMB 9279 / VKM B-1422 / R1).